The primary structure comprises 492 residues: MAARPPASLSYRTTGSTCLHPLSQLLGIPLDQVNFVACQLFALSAAFWFRIYLHPGKASPEVRHTLATILGIYFVVFCFGWYAVHLFVLVLMCYGVMVTASVSNIHRYSFFVAMGYLTICHISRIYIFHYGILTTDFSGPLMIVTQKITTLAFQVHDGLGRKAEDLSAEQHRLAVKAKPSLLEYLSYHLNFMSVIAGPCNNFKDYVAFIEGRHIHMKLLEVNWTQRGFQSLPEPSPMGAVIQKLCVTLMSLLLFLTLSKSFPVTFLIDDWFVHKANFLSRLWYLYVVMQAAKPKYYFAWTLADAVHNAAGFGFNGMDTDGKSRWDLLSNLNIWKIETATSFKMYLENWNIQTSTWLKCVCYERVPWYPTVLTFLLSALWHGVYPGYYFTFLTGVPVTLAARAVRNNYRHHFLSSKARKIAYDVVTWAVTQLAVSYTAAPFVMLAVEPTISLYKSVFFFLHIICLLIILFLPIKPHQPQRQSRSPNSVKKKAD.

6 consecutive transmembrane segments (helical) span residues 33–53 (VNFVACQLFALSAAFWFRIYL), 69–89 (ILGIYFVVFCFGWYAVHLFVL), 125–145 (IYIFHYGILTTDFSGPLMIVT), 179–199 (PSLLEYLSYHLNFMSVIAGPC), 237–257 (MGAVIQKLCVTLMSLLLFLTL), and 296–316 (YFAWTLADAVHNAAGFGFNGM). Active-site residues include asparagine 349 and histidine 380. The next 3 membrane-spanning stretches (helical) occupy residues 370–390 (VLTFLLSALWHGVYPGYYFTF), 423–443 (VVTWAVTQLAVSYTAAPFVML), and 452–472 (YKSVFFFLHIICLLIILFLPI). Residue serine 486 is modified to Phosphoserine.

It belongs to the membrane-bound acyltransferase family. Highly expressed in stomach, epididymis, and colon.

Its subcellular location is the endoplasmic reticulum membrane. The enzyme catalyses a 1-acyl-sn-glycero-3-phosphoethanolamine + an acyl-CoA = a 1,2-diacyl-sn-glycero-3-phosphoethanolamine + CoA. It carries out the reaction a 1-acyl-sn-glycero-3-phospho-L-serine + an acyl-CoA = a 1,2-diacyl-sn-glycero-3-phospho-L-serine + CoA. It catalyses the reaction a 1-acyl-sn-glycero-3-phosphocholine + an acyl-CoA = a 1,2-diacyl-sn-glycero-3-phosphocholine + CoA. The catalysed reaction is a 1-O-(1Z-alkenyl)-sn-glycero-3-phosphoethanolamine + (9Z)-octadecenoyl-CoA = 1-O-(1Z)-alkenyl-2-(9Z)-octadecenoyl-sn-glycero-3-phosphoethanolamine + CoA. The enzyme catalyses 1-octadecanoyl-sn-glycero-3-phosphoethanolamine + (9Z)-octadecenoyl-CoA = 1-octadecanoyl-2-(9Z-octadecenoyl)-sn-glycero-3-phosphoethanolamine + CoA. It carries out the reaction 1-(9Z-octadecenoyl)-sn-glycero-3-phospho-L-serine + (9Z)-octadecenoyl-CoA = 1,2-di-(9Z)-octadecenoyl-sn-glycero-3-phospho-L-serine + CoA. It catalyses the reaction 1-(9Z-octadecenoyl)-sn-glycero-3-phosphoethanolamine + (9Z)-octadecenoyl-CoA = 1,2-di-(9Z-octadecenoyl)-sn-glycero-3-phosphoethanolamine + CoA. The catalysed reaction is 1-hexadecanoyl-sn-glycero-3-phosphoethanolamine + (9Z)-octadecenoyl-CoA = 1-hexadecanoyl-2-(9Z-octadecenoyl)-sn-glycero-3-phosphoethanolamine + CoA. The enzyme catalyses 1-(10Z-heptadecenoyl)-sn-glycero-3-phosphoethanolamine + hexadecanoyl-CoA = 1-(10Z-heptadecenoyl)-2-hexadecanoyl-sn-glycero-3-phosphoethanolamine + CoA. It carries out the reaction 1-(9Z-octadecenoyl)-sn-glycero-3-phospho-L-serine + octadecanoyl-CoA = 1-(9Z-octadecenoyl)-2-octadecanoyl-sn-glycero-3-phospho-L-serine + CoA. It catalyses the reaction 1-(9Z-octadecenoyl)-sn-glycero-3-phospho-L-serine + (9Z)-hexadecenoyl-CoA = 1-(9Z-octadecenoyl)-2-(9Z-hexadecenoyl)-sn-glycero-3-phospho-L-serine + CoA. The catalysed reaction is 1-(9Z-octadecenoyl)-sn-glycero-3-phospho-L-serine + (9Z,12Z)-octadecadienoyl-CoA = 1-(9Z-octadecenoyl)-2-(9Z,12Z-octadienoyl)-sn-glycero-3-phospho-L-serine + CoA. The enzyme catalyses 1-hexadecanoyl-sn-glycero-3-phosphocholine + (9Z)-octadecenoyl-CoA = 1-hexadecanoyl-2-(9Z-octadecenoyl)-sn-glycero-3-phosphocholine + CoA. It carries out the reaction 1-(10Z-heptadecenoyl)-sn-glycero-3-phosphoethanolamine + (9Z)-octadecenoyl-CoA = 1-(10Z-heptadecenoyl)-2-(9Z-octadecenoyl)-sn-glycero-3-phosphoethanolamine + CoA. The protein operates within lipid metabolism; phospholipid metabolism. In terms of biological role, acyltransferase which catalyzes the transfer of an acyl group from an acyl-CoA towards a lysophospholipid producing a phospholipid and participates in the reacylation step of the phospholipid remodeling pathway also known as the Lands cycle. Acts on lysophosphatidylserine (1-acyl-2-hydroxy-sn-glycero-3-phospho-L-serine or LPS) and lysophosphatidylethanolamine (1-acyl-sn-glycero-3-phosphoethanolamine or LPE), and to a lesser extend lysophosphatidylcholine. Prefers oleoyl-CoA as the acyl donor and 1-oleoyl-LPE as acceptor. May play a role in neurite outgrowth during neuronal differentiation. This Mus musculus (Mouse) protein is Membrane-bound glycerophospholipid O-acyltransferase 1.